The chain runs to 526 residues: Microphthalmia-associated transcription factor (526 aa).

The segment at 20-54 (EPKTYYELKSQPLKSSSSAEHSGASKPPLSSSTMT) is disordered. A compositionally biased stretch (low complexity) spans 34–44 (SSSSAEHSGAS). A Phosphoserine; by MAPK modification is found at S180. Residue K289 forms a Glycyl lysine isopeptide (Lys-Gly) (interchain with G-Cter in SUMO) linkage. A bHLH domain is found at 311-364 (QKKDNHNLIERRRRFNINDRIKELGTLIPKSNDPDMRWNKGTILKASVDYIRKL). Residues 355–401 (KASVDYIRKLQREQQRAKDLENRQKKLEHANRHLLLRVQELEMQARA) are a coiled coil. Residues 374 to 395 (LENRQKKLEHANRHLLLRVQEL) are leucine-zipper. Residue S405 is modified to Phosphoserine; by GSK3. Position 414 is a phosphoserine (S414). Residue K423 forms a Glycyl lysine isopeptide (Lys-Gly) (interchain with G-Cter in SUMO) linkage. A Phosphoserine modification is found at S491. Positions 496–526 (TDPLLSSVSPGASKTSSRRSSMSAEETEHAC) are disordered. A compositionally biased stretch (low complexity) spans 507–519 (ASKTSSRRSSMSA). The residue at position 516 (S516) is a Phosphoserine; by RPS6KA1.

The protein belongs to the MiT/TFE family. As to quaternary structure, homodimer or heterodimer; dimerization is mediated via the coiled coil region. Efficient DNA binding requires dimerization with another bHLH protein. Binds DNA in the form of homodimer or heterodimer with either TFE3, TFEB or TFEC. Identified in a complex with HINT1 and CTNNB1. Interacts with KARS1. Interacts with VSX2. Phosphorylation at Ser-405 significantly enhances the ability to bind the tyrosinase promoter. Phosphorylated at Ser-180 and Ser-516 following KIT signaling, triggering a short live activation: Phosphorylation at Ser-180 and Ser-516 by MAPK and RPS6KA1, respectively, activate the transcription factor activity but also promote ubiquitination and subsequent degradation by the proteasome. Phosphorylated in response to blue light (415nm). In terms of processing, ubiquitinated following phosphorylation at Ser-180, leading to subsequent degradation by the proteasome. Deubiquitinated by USP13, preventing its degradation.

It is found in the nucleus. The protein localises to the cytoplasm. Transcription factor that regulates the expression of genes with essential roles in cell differentiation, proliferation and survival. Binds to M-boxes (5'-TCATGTG-3') and symmetrical DNA sequences (E-boxes) (5'-CACGTG-3') found in the promoters of target genes, such as BCL2 and tyrosinase (TYR). Plays an important role in melanocyte development by regulating the expression of tyrosinase (TYR) and tyrosinase-related protein 1 (TYRP1). Plays a critical role in the differentiation of various cell types, such as neural crest-derived melanocytes, mast cells, osteoclasts and optic cup-derived retinal pigment epithelium. The sequence is that of Microphthalmia-associated transcription factor (Mitf) from Rattus norvegicus (Rat).